We begin with the raw amino-acid sequence, 427 residues long: Histidinol dehydrogenase (427 aa).

Y125, Q186, and N209 together coordinate NAD(+). Substrate contacts are provided by S234, Q256, and H259. Residues Q256 and H259 each coordinate Zn(2+). Active-site proton acceptor residues include E325 and H326. The substrate site is built by H326, D359, E413, and H419. D359 lines the Zn(2+) pocket. Position 419 (H419) interacts with Zn(2+).

Belongs to the histidinol dehydrogenase family. Zn(2+) is required as a cofactor.

The catalysed reaction is L-histidinol + 2 NAD(+) + H2O = L-histidine + 2 NADH + 3 H(+). It functions in the pathway amino-acid biosynthesis; L-histidine biosynthesis; L-histidine from 5-phospho-alpha-D-ribose 1-diphosphate: step 9/9. Catalyzes the sequential NAD-dependent oxidations of L-histidinol to L-histidinaldehyde and then to L-histidine. This is Histidinol dehydrogenase from Leptospira interrogans serogroup Icterohaemorrhagiae serovar Lai (strain 56601).